Here is a 91-residue protein sequence, read N- to C-terminus: Movement protein TGBp3 (91 aa).

Residues 1–23 lie on the Lumenal side of the membrane; sequence MLGTRNIPTTSGLPLPPPSSSLS. Residues 24–46 form a helical membrane-spanning segment; sequence AYIFPTILAIIFAVFALVAIHIT. Residues 47–91 are Cytoplasmic-facing; sequence TPEPFCTIHIDGASITITNCPDPAAILNKVAIGPWRGLSYHNNLK.

This sequence belongs to the Tymovirales TGBp3 protein family.

Its subcellular location is the host endoplasmic reticulum membrane. Its function is as follows. Plays a role in viral cell-to-cell propagation, by facilitating genome transport to neighboring plant cells through plasmosdesmata. May induce the formation of granular vesicles derived from the Endoplasmic reticulum, which align on actin filaments. The polypeptide is Movement protein TGBp3 (Cymbidium mosaic virus (strain Singapore)).